A 679-amino-acid chain; its full sequence is tRNA uridine 5-carboxymethylaminomethyl modification enzyme MnmG (679 aa).

15-20 (GAGHAG) is an FAD binding site. 314–328 (GPRYCPSIEDKIVRF) provides a ligand contact to NAD(+).

It belongs to the MnmG family. Homodimer. Heterotetramer of two MnmE and two MnmG subunits. The cofactor is FAD.

It is found in the cytoplasm. Its function is as follows. NAD-binding protein involved in the addition of a carboxymethylaminomethyl (cmnm) group at the wobble position (U34) of certain tRNAs, forming tRNA-cmnm(5)s(2)U34. The protein is tRNA uridine 5-carboxymethylaminomethyl modification enzyme MnmG of Roseiflexus sp. (strain RS-1).